A 279-amino-acid chain; its full sequence is Putative potassium channel regulatory protein (279 aa).

The BTB domain maps to 5-74 (ELVTLNVGGM…VRTSQLSLPS (70 aa)). Residues 256 to 279 (ENSRQENYETETVQVKQAKPNKKR) form a disordered region.

Its subcellular location is the endoplasmic reticulum. Functionally, inhibits potassium fluxes in cells, possibly by retaining potassium channels in the cytoplasm. This Xenopus tropicalis (Western clawed frog) protein is Putative potassium channel regulatory protein (kcnrg).